We begin with the raw amino-acid sequence, 441 residues long: GTPase Der (441 aa).

EngA-type G domains follow at residues H2–D164 and I173–Q343. GTP-binding positions include G8 to S15, D55 to L59, N116 to D119, G179 to S186, D226 to I230, and N288 to D291.

The protein belongs to the TRAFAC class TrmE-Era-EngA-EngB-Septin-like GTPase superfamily. EngA (Der) GTPase family. As to quaternary structure, associates with the 50S ribosomal subunit.

Functionally, GTPase that plays an essential role in the late steps of ribosome biogenesis. This is GTPase Der from Deinococcus deserti (strain DSM 17065 / CIP 109153 / LMG 22923 / VCD115).